A 478-amino-acid polypeptide reads, in one-letter code: Ankyrin repeat and BTB/POZ domain-containing protein 1 (478 aa).

ANK repeat units follow at residues 1-31 (MDTS…EVNV) and 35-64 (WDST…RCEA). BTB domains lie at 115-182 (SDVV…DIGV) and 272-346 (PDIC…ELPP). Residues 451-477 (VQTYSAIEEAQQRLRALEDLLVSIGLD) adopt a coiled-coil conformation.

The protein localises to the cytoplasm. Functionally, may act as a mediator of the PTEN growth-suppressive signaling pathway. May play a role in developmental processes. The sequence is that of Ankyrin repeat and BTB/POZ domain-containing protein 1 from Mus musculus (Mouse).